A 181-amino-acid polypeptide reads, in one-letter code: Inner membrane-spanning protein YciB (181 aa).

5 consecutive transmembrane segments (helical) span residues 10–30, 50–70, 72–92, 118–138, and 148–168; these read LIIFFAVYKFFDIYVASGALI, MHLITFVMVTVFGSLTLILHD, SFIKWKVTIVYALFAIALGVS, VTWYWVSFFVVCGLVNIYVAF, and FKVFGLTALTLINTVLTVLYL.

It belongs to the YciB family.

The protein localises to the cell inner membrane. In terms of biological role, plays a role in cell envelope biogenesis, maintenance of cell envelope integrity and membrane homeostasis. In Shewanella halifaxensis (strain HAW-EB4), this protein is Inner membrane-spanning protein YciB.